The following is a 309-amino-acid chain: MTGTAPVSRRQYLGTAGAIIGTTAGCLTGADASIHVLAAGSLTSTIEDHIRPAFEDATDHTLRPEYHGSTTLLQLISDGTKHPDVAISADATLLRTRLFDAHADWALEFASNRLGICYVPSTPLGRRLAAGTPWWRAAVDAAPDTIAVSDPALDPLGYRTLMAFTLAATAHDAPDLRADLDPATVTKPSESQLLADVETGNHAAAVVYENMALDHDLPFLGFPDAYNFAAPERADHYASATYTTDDGTRIHGRPITYATTVLNDASNTAGGRAFVRFLAANPDMVRDAGLAVPESLPTHQGALPDALER.

The segment at residues 1–32 is a signal peptide (tat-type signal); the sequence is MTGTAPVSRRQYLGTAGAIIGTTAGCLTGADA.

It belongs to the bacterial solute-binding protein 1 family. WtpA subfamily. Predicted to be exported by the Tat system. The position of the signal peptide cleavage has not been experimentally proven.

This is an uncharacterized protein from Halobacterium salinarum (strain ATCC 700922 / JCM 11081 / NRC-1) (Halobacterium halobium).